We begin with the raw amino-acid sequence, 278 residues long: Probable endonuclease 4 (278 aa).

His-66, His-106, Glu-142, Asp-176, His-179, His-213, Asp-226, His-228, and Glu-258 together coordinate Zn(2+).

It belongs to the AP endonuclease 2 family. Zn(2+) is required as a cofactor.

It carries out the reaction Endonucleolytic cleavage to 5'-phosphooligonucleotide end-products.. In terms of biological role, endonuclease IV plays a role in DNA repair. It cleaves phosphodiester bonds at apurinic or apyrimidinic (AP) sites, generating a 3'-hydroxyl group and a 5'-terminal sugar phosphate. The polypeptide is Probable endonuclease 4 (Halothermothrix orenii (strain H 168 / OCM 544 / DSM 9562)).